Reading from the N-terminus, the 619-residue chain is Thiohydroximate-O-sulfate sulfur/sulfate-lyase (nitrile-forming) NSP4 (619 aa).

Jacalin-type lectin domains are found at residues 2–142 (AQKV…YFAP) and 151–292 (AKKL…YISL). Kelch repeat units follow at residues 326–374 (KIYS…VCMV), 379–425 (TLYV…SMAA), 429–478 (NVYV…VVQG), 480–524 (VWVV…ASAA), and 528–583 (HIVI…GWTA). The Proton donor role is filled by Arg386. Positions 386, 419, 441, 470, and 519 each coordinate a (Z)-N-(sulfonatooxy)alkanimidothioate. The active-site Proton donor is Arg441. Glu535, Asp539, and His543 together coordinate Fe(2+). A (Z)-N-(sulfonatooxy)alkanimidothioate is bound at residue Trp581.

The protein belongs to the jacalin lectin family. It depends on Fe(2+) as a cofactor. In terms of tissue distribution, mainly expressed in roots, and, to a lower extent, in seedlings and leaves. Observed in seeds.

It carries out the reaction a (Z)-N-(sulfonatooxy)alkanimidothioate = a nitrile + sulfur + sulfate. It catalyses the reaction (Z)-phenyl-N-(sulfonatooxy)methanimidothioate = phenylacetonitrile + sulfur + sulfate. The enzyme catalyses (Z)-N-(sulfonatooxy)prop-2-enimidothioate = but-3-enenitrile + sulfur + sulfate. Its function is as follows. Specifier protein that contributes to constitutive and herbivore-induced simple nitrile formation. Promotes simple nitriles, but not epithionitrile or thiocyanate formation. Converts allylglucosinolate and benzylglucosinolate (glucotropaeolin) to their corresponding simple nitriles in the presence of myrosinase. This Arabidopsis thaliana (Mouse-ear cress) protein is Thiohydroximate-O-sulfate sulfur/sulfate-lyase (nitrile-forming) NSP4.